Reading from the N-terminus, the 321-residue chain is Annexin A5 (321 aa).

A2 is modified (N-acetylalanine). 4 Annexin repeats span residues F15–K86, P87–Q158, A170–K242, and S246–G317. K29 participates in a covalent cross-link: Glycyl lysine isopeptide (Lys-Gly) (interchain with G-Cter in SUMO1); alternate. Residue K29 forms a Glycyl lysine isopeptide (Lys-Gly) (interchain with G-Cter in SUMO2); alternate linkage. K70, K76, K79, K97, and K101 each carry N6-acetyllysine. An N6-succinyllysine modification is found at K290. The [IL]-x-C-x-x-[DE] motif motif lies at L314–D320.

Belongs to the annexin family. Monomer. Binds ATRX and EIF5B. Post-translationally, S-nitrosylation is induced by interferon-gamma and oxidatively-modified low-densitity lipoprotein (LDL(ox)) possibly implicating the iNOS-S100A8/9 transnitrosylase complex.

This protein is an anticoagulant protein that acts as an indirect inhibitor of the thromboplastin-specific complex, which is involved in the blood coagulation cascade. The sequence is that of Annexin A5 (ANXA5) from Bos taurus (Bovine).